The sequence spans 367 residues: Glutamate 5-kinase (367 aa).

An ATP-binding site is contributed by lysine 10. Substrate is bound by residues serine 50, aspartate 137, and asparagine 149. ATP contacts are provided by residues 169-170 (TD) and 211-217 (TGGMGTK). Residues 275 to 353 (AGELTVDAGA…QQIDAILGYE (79 aa)) enclose the PUA domain.

Belongs to the glutamate 5-kinase family.

The protein localises to the cytoplasm. The catalysed reaction is L-glutamate + ATP = L-glutamyl 5-phosphate + ADP. It functions in the pathway amino-acid biosynthesis; L-proline biosynthesis; L-glutamate 5-semialdehyde from L-glutamate: step 1/2. Functionally, catalyzes the transfer of a phosphate group to glutamate to form L-glutamate 5-phosphate. The protein is Glutamate 5-kinase of Klebsiella pneumoniae (strain 342).